We begin with the raw amino-acid sequence, 2266 residues long: Protein ELYS (2266 aa).

A seven-bladed beta propeller repeats region spans residues 1–494; that stretch reads MRDLRAQVTS…SGVVHLTCTG (494 aa). Residues 1-981 are necessary for cytoplasmic localization; the sequence is MRDLRAQVTS…QTLKINVMND (981 aa). Phosphoserine occurs at positions 509, 528, 1080, 1138, 1142, 1150, 1153, 1155, and 1160. Residues 591 to 1092 form an important for nuclear localization region; that stretch reads VVLTKEEFDR…IEEPSPIVYS (502 aa). The tract at residues 1019–2266 is disordered; sequence YHLSTSSVFR…PKQILRRKML (1248 aa). The necessary for nuclear localization stretch occupies residues 1149-2266; sequence RSLPSSSQLK…PKQILRRKML (1118 aa). A Phosphothreonine modification is found at T1175. S1214, S1218, S1222, S1232, and S1250 each carry phosphoserine. T1257 is modified (phosphothreonine). Residues S1283 and S1297 each carry the phosphoserine modification. 2 stretches are compositionally biased toward polar residues: residues 1305 to 1320 and 1335 to 1353; these read KGNS…TTLE and FTAS…NVTE. T1369 carries the phosphothreonine modification. A phosphoserine mark is found at S1371 and S1513. A mediates transcriptional activity region spans residues 1446–1698; it reads RANDNKSMAD…MEQSIHETIP (253 aa). Position 1517 is a phosphothreonine (T1517). S1533, S1541, S1729, and S1806 each carry phosphoserine. 2 stretches are compositionally biased toward polar residues: residues 1796–1808 and 1822–1838; these read LSQN…NSVT and ILEN…ITTG. T1808 carries the post-translational modification Phosphothreonine. An important for nuclear localization and chromatin binding region spans residues 1842–2266; that stretch reads KRLKSSQLLE…PKQILRRKML (425 aa). Residues S1878, S1884, and S1898 each carry the phosphoserine modification. Over residues 1908 to 1919 the composition is skewed to polar residues; that stretch reads STNLDASENTGN. 2 stretches are compositionally biased toward basic and acidic residues: residues 1920–1930 and 1940–1952; these read KQDDKSSDKQL and GREV…REDS. Residues S1944 and S1946 each carry the phosphoserine modification. The a.T hook DNA-binding region spans 1971–1983; it reads PRKRGRPRKINPS. The span at 1986-2004 shows a compositional bias: basic and acidic residues; that stretch reads VGSKAVKEERSPKKKEAPS. A phosphoserine mark is found at S1996, S2043, S2044, and S2060. Positions 2064–2084 are enriched in basic and acidic residues; sequence VSEERTDEMTHKETNEQEERL. 4 positions are modified to phosphoserine: S2089, S2120, S2123, and S2154. Basic and acidic residues predominate over residues 2169–2179; it reads NKLEDELKDDA. Residues 2188-2197 are compositionally biased toward basic residues; that stretch reads PKAKRIRTSK. Phosphoserine is present on residues S2212, S2222, and S2226.

It belongs to the ELYS family. As to quaternary structure, associates with the Nup107-160 subcomplex of the NPC.

It localises to the cytoplasm. Its subcellular location is the nucleus. It is found in the nucleus envelope. The protein resides in the nucleus matrix. The protein localises to the chromosome. It localises to the centromere. Its subcellular location is the kinetochore. It is found in the nucleoplasm. The protein resides in the nuclear pore complex. Its function is as follows. Required for the assembly of a functional nuclear pore complex (NPC) on the surface of chromosomes as nuclei form at the end of mitosis. May initiate NPC assembly by binding to chromatin and recruiting the Nup107-160 subcomplex of the NPC. Also required for the localization of the Nup107-160 subcomplex of the NPC to the kinetochore during mitosis and for the completion of cytokinesis. The protein is Protein ELYS (AHCTF1) of Homo sapiens (Human).